A 1290-amino-acid chain; its full sequence is Alpha-factor-transporting ATPase (1290 aa).

Topologically, residues Met1–Arg25 are cytoplasmic. The chain crosses the membrane as a helical span at residues Leu26–Ile46. In terms of domain architecture, ABC transmembrane type-1 1 spans Leu27 to Lys319. Residues Leu47 to Ser75 lie on the Extracellular side of the membrane. N-linked (GlcNAc...) asparagine glycosylation is present at Asn61. Residues Met76–Trp96 form a helical membrane-spanning segment. The Cytoplasmic portion of the chain corresponds to Met97 to Glu150. Residues Ala151 to Tyr171 traverse the membrane as a helical segment. Over Tyr172–Ser173 the chain is Extracellular. A helical transmembrane segment spans residues Trp174–Phe194. Residues Ser195 to Gly262 are Cytoplasmic-facing. The chain crosses the membrane as a helical span at residues Ile263–Ile283. Over Lys284–Cys296 the chain is Extracellular. A helical transmembrane segment spans residues Phe297 to Leu317. Residues Gln318–Lys715 lie on the Cytoplasmic side of the membrane. The region spanning Leu357–His603 is the ABC transporter 1 domain. ATP is bound at residue Gly392–Ser399. Residues Ile716 to Tyr736 form a helical membrane-spanning segment. Residues Leu717–Arg1007 form the ABC transmembrane type-1 2 domain. Topologically, residues Thr737–Ser763 are extracellular. Residues Leu764–Leu784 form a helical membrane-spanning segment. At Asp785 to Glu838 the chain is on the cytoplasmic side. A helical membrane pass occupies residues Phe839 to Val859. The Extracellular portion of the chain corresponds to Ser860–Ser865. A helical transmembrane segment spans residues Leu866–Leu886. At Gln887–Thr945 the chain is on the cytoplasmic side. The chain crosses the membrane as a helical span at residues Gly946 to Tyr966. Over Gly967–Met981 the chain is Extracellular. The chain crosses the membrane as a helical span at residues Phe982–Ile1002. Over Pro1003–Ser1290 the chain is Cytoplasmic. Lys1022 participates in a covalent cross-link: Glycyl lysine isopeptide (Lys-Gly) (interchain with G-Cter in ubiquitin). The ABC transporter 2 domain occupies Val1052–Asn1287. Gly1087–Ser1094 is a binding site for ATP.

It belongs to the ABC transporter superfamily. Alpha-factor sex pheromone exporter (TC 3.A.1.206) family. In terms of processing, degraded via the ubiquitin system.

It localises to the membrane. It carries out the reaction an [alpha-factor](in) + ATP + H2O = an [alpha-factor](out) + ADP + phosphate + H(+). Functionally, STE6 is required in yeast MATA cells for production of A-factor pheromone. STE6 is involved in the transport of the farnesyl-derivation of the A-factor pheromone. In Saccharomyces cerevisiae (strain ATCC 204508 / S288c) (Baker's yeast), this protein is Alpha-factor-transporting ATPase (STE6).